Consider the following 284-residue polypeptide: 4-hydroxybenzoate octaprenyltransferase (284 aa).

The next 8 helical transmembrane spans lie at 14–34 (VHQP…LWIT), 41–61 (FIVL…GCVI), 93–113 (WVFF…NNII), 134–154 (YIYL…LIVY), 166–186 (WLLF…YAMV), 209–229 (IVIG…GIVE), 233–253 (IIFY…QQVL), and 262–282 (CLWA…GIVL).

This sequence belongs to the UbiA prenyltransferase family. Mg(2+) is required as a cofactor.

The protein localises to the cell inner membrane. The enzyme catalyses all-trans-octaprenyl diphosphate + 4-hydroxybenzoate = 4-hydroxy-3-(all-trans-octaprenyl)benzoate + diphosphate. It participates in cofactor biosynthesis; ubiquinone biosynthesis. Functionally, catalyzes the prenylation of para-hydroxybenzoate (PHB) with an all-trans polyprenyl group. Mediates the second step in the final reaction sequence of ubiquinone-8 (UQ-8) biosynthesis, which is the condensation of the polyisoprenoid side chain with PHB, generating the first membrane-bound Q intermediate 3-octaprenyl-4-hydroxybenzoate. This Blochmanniella floridana protein is 4-hydroxybenzoate octaprenyltransferase.